The following is a 362-amino-acid chain: Cap-specific mRNA (nucleoside-2'-O-)-methyltransferase 1 (362 aa).

The RrmJ-type SAM-dependent 2'-O-MTase domain occupies 87–294; that stretch reads SFGNRAGHKL…ERYLVCLGFL (208 aa). Glycine 130 and aspartate 207 together coordinate S-adenosyl-L-methionine. Lysine 248 (proton acceptor) is an active-site residue.

It localises to the nucleus. It carries out the reaction a 5'-end (N(7)-methyl 5'-triphosphoguanosine)-ribonucleoside in mRNA + S-adenosyl-L-methionine = a 5'-end (N(7)-methyl 5'-triphosphoguanosine)-(2'-O-methyl-ribonucleoside) in mRNA + S-adenosyl-L-homocysteine + H(+). Functionally, S-adenosyl-L-methionine-dependent methyltransferase that mediates RNA cap1 2'-O-ribose methylation to the 5'-cap structure of spliced leader and U1 small nuclear RNAs. Methylates the ribose of the first nucleotide of a m(7)GpppG-capped RNA to produce m(7)GpppNmp (cap1). Cap1 modification is linked to higher levels of translation. Recognizes a guanosine cap on RNA independent of its N(7) methylation status. The sequence is that of Cap-specific mRNA (nucleoside-2'-O-)-methyltransferase 1 from Trypanosoma cruzi (strain CL Brener).